Here is a 149-residue protein sequence, read N- to C-terminus: Nucleoside diphosphate kinase (149 aa).

ATP is bound by residues Lys9, Phe57, Arg85, Thr91, Arg102, and Asn112. The active-site Pros-phosphohistidine intermediate is the His115.

It belongs to the NDK family. As to quaternary structure, homotetramer. Requires Mg(2+) as cofactor.

Its subcellular location is the cytoplasm. The catalysed reaction is a 2'-deoxyribonucleoside 5'-diphosphate + ATP = a 2'-deoxyribonucleoside 5'-triphosphate + ADP. It carries out the reaction a ribonucleoside 5'-diphosphate + ATP = a ribonucleoside 5'-triphosphate + ADP. Its function is as follows. Major role in the synthesis of nucleoside triphosphates other than ATP. The ATP gamma phosphate is transferred to the NDP beta phosphate via a ping-pong mechanism, using a phosphorylated active-site intermediate. In Staphylococcus saprophyticus subsp. saprophyticus (strain ATCC 15305 / DSM 20229 / NCIMB 8711 / NCTC 7292 / S-41), this protein is Nucleoside diphosphate kinase.